The following is a 143-amino-acid chain: UPF0306 protein plu4501 (143 aa).

The protein belongs to the UPF0306 family.

The chain is UPF0306 protein plu4501 from Photorhabdus laumondii subsp. laumondii (strain DSM 15139 / CIP 105565 / TT01) (Photorhabdus luminescens subsp. laumondii).